Consider the following 89-residue polypeptide: UPF0147 protein STK_04605 (89 aa).

The protein belongs to the UPF0147 family.

This Sulfurisphaera tokodaii (strain DSM 16993 / JCM 10545 / NBRC 100140 / 7) (Sulfolobus tokodaii) protein is UPF0147 protein STK_04605.